Consider the following 477-residue polypeptide: tRNA-2-methylthio-N(6)-dimethylallyladenosine synthase (477 aa).

Positions 3–120 constitute an MTTase N-terminal domain; sequence KKLHIKTWGC…LPTMIKQVQE (118 aa). Positions 12, 49, 83, 157, 161, and 164 each coordinate [4Fe-4S] cluster. Positions 143-375 constitute a Radical SAM core domain; the sequence is RAEGATAFVS…QHVINNQSMQ (233 aa). The region spanning 378-441 is the TRAM domain; that stretch reads RAMLGSTQRI…PNSLRGKFLR (64 aa).

It belongs to the methylthiotransferase family. MiaB subfamily. As to quaternary structure, monomer. [4Fe-4S] cluster serves as cofactor.

It localises to the cytoplasm. The enzyme catalyses N(6)-dimethylallyladenosine(37) in tRNA + (sulfur carrier)-SH + AH2 + 2 S-adenosyl-L-methionine = 2-methylsulfanyl-N(6)-dimethylallyladenosine(37) in tRNA + (sulfur carrier)-H + 5'-deoxyadenosine + L-methionine + A + S-adenosyl-L-homocysteine + 2 H(+). Functionally, catalyzes the methylthiolation of N6-(dimethylallyl)adenosine (i(6)A), leading to the formation of 2-methylthio-N6-(dimethylallyl)adenosine (ms(2)i(6)A) at position 37 in tRNAs that read codons beginning with uridine. This is tRNA-2-methylthio-N(6)-dimethylallyladenosine synthase from Aeromonas hydrophila subsp. hydrophila (strain ATCC 7966 / DSM 30187 / BCRC 13018 / CCUG 14551 / JCM 1027 / KCTC 2358 / NCIMB 9240 / NCTC 8049).